Consider the following 262-residue polypeptide: Tryptophan synthase alpha chain (262 aa).

Active-site proton acceptor residues include Glu49 and Asp60.

This sequence belongs to the TrpA family. Tetramer of two alpha and two beta chains.

The catalysed reaction is (1S,2R)-1-C-(indol-3-yl)glycerol 3-phosphate + L-serine = D-glyceraldehyde 3-phosphate + L-tryptophan + H2O. The protein operates within amino-acid biosynthesis; L-tryptophan biosynthesis; L-tryptophan from chorismate: step 5/5. Its function is as follows. The alpha subunit is responsible for the aldol cleavage of indoleglycerol phosphate to indole and glyceraldehyde 3-phosphate. The protein is Tryptophan synthase alpha chain of Thermoanaerobacter sp. (strain X514).